Consider the following 98-residue polypeptide: Small ribosomal subunit protein uS19 (98 aa).

Disordered stretches follow at residues 1 to 30 (MARS…KKSV) and 78 to 98 (RTFH…PAKK). Residues 9-24 (PFADKHLTKKVEDANK) show a composition bias toward basic and acidic residues.

The protein belongs to the universal ribosomal protein uS19 family.

In terms of biological role, protein S19 forms a complex with S13 that binds strongly to the 16S ribosomal RNA. The sequence is that of Small ribosomal subunit protein uS19 from Anaeromyxobacter dehalogenans (strain 2CP-1 / ATCC BAA-258).